The chain runs to 1212 residues: Probable serine/threonine-protein kinase DDB_G0284491 (1212 aa).

Residues 197–217 (LFHSFSLLNLYVYLIIVIRII) form a helical membrane-spanning segment. Residues Asn-229, Asn-299, Asn-309, Asn-328, Asn-335, Asn-341, Asn-344, Asn-391, Asn-419, Asn-422, Asn-426, Asn-427, Asn-435, and Asn-499 are each glycosylated (N-linked (GlcNAc...) asparagine). The tract at residues 288 to 329 (LNNNNDNNLNNNNSNNNLNNNNNSNSNFNNDNNLNSNINSND) is disordered. 2 disordered regions span residues 412 to 439 (GNSNSGSNNSNSSNNNSSSNSLINNSGG) and 489 to 517 (IIKNNNNNNNNNSNNNNNNNDEDDSDYEE). Residues 489 to 507 (IIKNNNNNNNNNSNNNNNN) show a composition bias toward low complexity. The span at 508-517 (NDEDDSDYEE) shows a compositional bias: acidic residues. The helical transmembrane segment at 673–693 (IQIFDDYSLIIALRLLMNFIL) threads the bilayer. The span at 703 to 720 (VPPPPTQPSSRPQSPPTV) shows a compositional bias: pro residues. Disordered stretches follow at residues 703-733 (VPPPPTQPSSRPQSPPTVSPLTPLNNHHHSG) and 751-813 (EVVS…NNNN). One can recognise a Protein kinase domain in the interval 865–1182 (ETEIEPFASG…EVYNDLQDIY (318 aa)). ATP-binding positions include 871 to 879 (FASGGQANI) and Lys-924. Catalysis depends on Asp-1035, which acts as the Proton acceptor.

The protein belongs to the protein kinase superfamily. Ser/Thr protein kinase family.

Its subcellular location is the membrane. The catalysed reaction is L-seryl-[protein] + ATP = O-phospho-L-seryl-[protein] + ADP + H(+). It carries out the reaction L-threonyl-[protein] + ATP = O-phospho-L-threonyl-[protein] + ADP + H(+). The polypeptide is Probable serine/threonine-protein kinase DDB_G0284491 (Dictyostelium discoideum (Social amoeba)).